Here is a 377-residue protein sequence, read N- to C-terminus: Unsaturated 3S-rhamnoglycuronyl hydrolase (377 aa).

Residues 1-25 form the signal peptide; that stretch reads MKNQALKILTLCVLVGSAMSLKLYA. Asp-161 acts as the Proton donor in catalysis.

Belongs to the glycosyl hydrolase 105 family.

The protein localises to the periplasm. In terms of biological role, unsaturated beta-glucuronyl hydrolase involved in ulvan degradation. Ulvan is the main polysaccharide component of the Ulvales (green seaweed) cell wall. It is composed of disaccharide building blocks comprising 3-sulfated rhamnose (Rha3S) linked to D-glucuronic acid (GlcA), L-iduronic acid (IduA), or D-xylose (Xyl). Unsaturated 3S-rhamnoglycuronyl hydrolase works together with ulvan lyases to fully degrade the ulvan polymer, catalyzing specifically the cleavage of the unsaturated 4-deoxy-L-threo-hex-4-enopyranosiduronic acid (deltaUA) of deltaUA-Rha3S disaccharides and deltaUA-Rha3S-Xyl-Rha3S tetrasaccharides, the end products of the ulvan lyase reaction. Also hydrolases deltaUA-Rha3S-IduA-Rha3S and deltaUA-Rha3S-GlcA-Rha3S tetrasaccharidestetrasaccharides. Prefers tetrasaccharides over disaccharides and prefers an uronic residue at subsite +2. The chain is Unsaturated 3S-rhamnoglycuronyl hydrolase from Formosa agariphila (strain DSM 15362 / KCTC 12365 / LMG 23005 / KMM 3901 / M-2Alg 35-1).